A 236-amino-acid chain; its full sequence is MEKASMIYEGKGKKLYNTSHPDQVVAEFKDDLTAFNAEKKGNEAGKGALNCQISTEIFKLLEAEGIKTHFIKQLDEKNMLCKRVSIIPIEVVTRNIATGSLSKRLGIKEGSVLPFSLVEFYYKDDALGDPIMNDEHAILLKCVNSQEELEFLKETAREINEILRSFFDSKGLNLVDFKLEFGKDIEGNILLADEISPDSCRFWDKKTNEKLDKDRFRQDLGNVKMAYEEVLRRILN.

This sequence belongs to the SAICAR synthetase family.

It catalyses the reaction 5-amino-1-(5-phospho-D-ribosyl)imidazole-4-carboxylate + L-aspartate + ATP = (2S)-2-[5-amino-1-(5-phospho-beta-D-ribosyl)imidazole-4-carboxamido]succinate + ADP + phosphate + 2 H(+). Its pathway is purine metabolism; IMP biosynthesis via de novo pathway; 5-amino-1-(5-phospho-D-ribosyl)imidazole-4-carboxamide from 5-amino-1-(5-phospho-D-ribosyl)imidazole-4-carboxylate: step 1/2. The chain is Phosphoribosylaminoimidazole-succinocarboxamide synthase from Wolinella succinogenes (strain ATCC 29543 / DSM 1740 / CCUG 13145 / JCM 31913 / LMG 7466 / NCTC 11488 / FDC 602W) (Vibrio succinogenes).